The following is a 188-amino-acid chain: MANSGCKDVTGPDEESFLYFAYGSNLLTERIHLRNPSAAFFCVARLQDFKLDFGNSQGKTSQTWHGGIATIFQSPGDEVWGVVWKMNKSNLNSLDEQEGVKSGMYVVIEVKVATQEGKEITCRSYLMTNYESAPPSPQYKKIICMGAKENGLPLEYQEKLKAIEPNDYTGKVSEEIEDIIKKGETQTL.

19–24 (YFAYGS) is a substrate binding site. Glu-98 functions as the Proton acceptor in the catalytic mechanism. Position 139 (Tyr-139) interacts with substrate. Ser-173 bears the Phosphoserine mark.

This sequence belongs to the gamma-glutamylcyclotransferase family. In terms of assembly, homodimer.

The enzyme catalyses an alpha-(gamma-L-glutamyl)-L-amino acid = 5-oxo-L-proline + an L-alpha-amino acid. Functionally, catalyzes the formation of 5-oxoproline from gamma-glutamyl dipeptides and may play a significant role in glutathione homeostasis. Induces release of cytochrome c from mitochondria with resultant induction of apoptosis. This chain is Gamma-glutamylcyclotransferase, found in Homo sapiens (Human).